The chain runs to 791 residues: Protein SEY1 (791 aa).

Topologically, residues 1–685 are cytoplasmic; it reads MSEDGASKCQ…KRSTIKSHTH (685 aa). The GB1/RHD3-type G domain occupies 40–268; it reads GLDYHVISVF…REDYYLSGKY (229 aa). 50-57 provides a ligand contact to GTP; the sequence is GSQSSGKS. Residues 686 to 706 form a helical membrane-spanning segment; that stretch reads IPMWIYAIIAVLGWNEFMLVL. The Lumenal portion of the chain corresponds to 707–709; it reads RNP. Residues 710-730 traverse the membrane as a helical segment; it reads LFIALMLLIVGAAYTVHRLNL. Over 731-791 the chain is Cytoplasmic; it reads WTPLATFASA…NETKENANES (61 aa). Positions 763–791 are disordered; it reads PKNASSKPVESFEMQDLSVNETKENANES.

This sequence belongs to the TRAFAC class dynamin-like GTPase superfamily. GB1/RHD3 GTPase family. RHD3 subfamily.

The protein localises to the endoplasmic reticulum membrane. Cooperates with the reticulon proteins and tubule-shaping DP1 family proteins to generate and maintain the structure of the tubular endoplasmic reticulum network. Has GTPase activity, which is required for its function in ER organization. This Eremothecium gossypii (strain ATCC 10895 / CBS 109.51 / FGSC 9923 / NRRL Y-1056) (Yeast) protein is Protein SEY1.